The following is a 432-amino-acid chain: Glutamate-1-semialdehyde 2,1-aminomutase (432 aa).

K272 bears the N6-(pyridoxal phosphate)lysine mark.

It belongs to the class-III pyridoxal-phosphate-dependent aminotransferase family. HemL subfamily. As to quaternary structure, homodimer. Requires pyridoxal 5'-phosphate as cofactor.

It is found in the cytoplasm. It catalyses the reaction (S)-4-amino-5-oxopentanoate = 5-aminolevulinate. Its pathway is porphyrin-containing compound metabolism; protoporphyrin-IX biosynthesis; 5-aminolevulinate from L-glutamyl-tRNA(Glu): step 2/2. It participates in porphyrin-containing compound metabolism; chlorophyll biosynthesis. This is Glutamate-1-semialdehyde 2,1-aminomutase from Nostoc punctiforme (strain ATCC 29133 / PCC 73102).